Here is an 837-residue protein sequence, read N- to C-terminus: Protein translocase subunit SecA (837 aa).

ATP-binding positions include Q85, 103–107 (GEGKT), and D493. Positions 821, 823, 832, and 833 each coordinate Zn(2+).

It belongs to the SecA family. Monomer and homodimer. Part of the essential Sec protein translocation apparatus which comprises SecA, SecYEG and auxiliary proteins SecDF. Other proteins may also be involved. Zn(2+) serves as cofactor.

The protein localises to the cell membrane. Its subcellular location is the cytoplasm. The enzyme catalyses ATP + H2O + cellular proteinSide 1 = ADP + phosphate + cellular proteinSide 2.. Part of the Sec protein translocase complex. Interacts with the SecYEG preprotein conducting channel. Has a central role in coupling the hydrolysis of ATP to the transfer of proteins into and across the cell membrane, serving as an ATP-driven molecular motor driving the stepwise translocation of polypeptide chains across the membrane. The protein is Protein translocase subunit SecA of Streptococcus pneumoniae (strain P1031).